The sequence spans 106 residues: Pyrimidine/purine nucleoside phosphorylase (106 aa).

Belongs to the nucleoside phosphorylase PpnP family.

It carries out the reaction a purine D-ribonucleoside + phosphate = a purine nucleobase + alpha-D-ribose 1-phosphate. The enzyme catalyses adenosine + phosphate = alpha-D-ribose 1-phosphate + adenine. It catalyses the reaction cytidine + phosphate = cytosine + alpha-D-ribose 1-phosphate. The catalysed reaction is guanosine + phosphate = alpha-D-ribose 1-phosphate + guanine. It carries out the reaction inosine + phosphate = alpha-D-ribose 1-phosphate + hypoxanthine. The enzyme catalyses thymidine + phosphate = 2-deoxy-alpha-D-ribose 1-phosphate + thymine. It catalyses the reaction uridine + phosphate = alpha-D-ribose 1-phosphate + uracil. The catalysed reaction is xanthosine + phosphate = alpha-D-ribose 1-phosphate + xanthine. In terms of biological role, catalyzes the phosphorolysis of diverse nucleosides, yielding D-ribose 1-phosphate and the respective free bases. Can use uridine, adenosine, guanosine, cytidine, thymidine, inosine and xanthosine as substrates. Also catalyzes the reverse reactions. In Leptospira interrogans serogroup Icterohaemorrhagiae serovar copenhageni (strain Fiocruz L1-130), this protein is Pyrimidine/purine nucleoside phosphorylase.